The chain runs to 255 residues: MSNITMKELLEAGVHFGHQTKRWNPKMKPYIFGARNGIYIIDLQKTVRLFKNAYSFVTDAAQAGETVLFVGTKKQAQDSVAEEAQRCGQFYVNDRWLGGMLTNFSTVKQSIDRLKRLDAMIADGTIEAYTKKEQLKLAKEREKLEKTLGGIKGMGKVPGVLFVVDPKNEEIAVSEAKKLGIPVVAIVDTNCDPDDINYVIPGNDDAIRAIRLLTSKMADAVLEGGQARNARLQTGAEEEFSTEGEEVVEETPAEA.

A disordered region spans residues 231–255 (RLQTGAEEEFSTEGEEVVEETPAEA). A compositionally biased stretch (acidic residues) spans 236–255 (AEEEFSTEGEEVVEETPAEA).

The protein belongs to the universal ribosomal protein uS2 family.

This is Small ribosomal subunit protein uS2 from Geobacter sp. (strain M21).